The sequence spans 322 residues: RING finger protein 113B (322 aa).

Residues 24–92 (KPGRKGAAGL…EEAAPESLDV (69 aa)) are disordered. Residues 46–60 (SSSSGDEGDTVAQPP) are compositionally biased toward low complexity. The C3H1-type zinc-finger motif lies at 190 to 218 (DYQPDICKDYKETGFCGFGDSCKFLHDRS). The RING-type zinc finger occupies 256–294 (CFICRQAFQNPVVTKCRHYFCESCALEHFRATPRCYICD).

The sequence is that of RING finger protein 113B (RNF113B) from Homo sapiens (Human).